A 404-amino-acid chain; its full sequence is Cysteine desulfurase IscS (404 aa).

Pyridoxal 5'-phosphate contacts are provided by residues 75-76 (AT), Asn-155, Gln-183, and 203-205 (SGH). At Lys-206 the chain carries N6-(pyridoxal phosphate)lysine. Thr-243 serves as a coordination point for pyridoxal 5'-phosphate. The Cysteine persulfide intermediate role is filled by Cys-328. Cys-328 serves as a coordination point for [2Fe-2S] cluster.

It belongs to the class-V pyridoxal-phosphate-dependent aminotransferase family. NifS/IscS subfamily. In terms of assembly, homodimer. Forms a heterotetramer with IscU, interacts with other sulfur acceptors. Pyridoxal 5'-phosphate is required as a cofactor.

Its subcellular location is the cytoplasm. The enzyme catalyses (sulfur carrier)-H + L-cysteine = (sulfur carrier)-SH + L-alanine. The protein operates within cofactor biosynthesis; iron-sulfur cluster biosynthesis. Functionally, master enzyme that delivers sulfur to a number of partners involved in Fe-S cluster assembly, tRNA modification or cofactor biosynthesis. Catalyzes the removal of elemental sulfur and selenium atoms from cysteine and selenocysteine to produce alanine. Functions as a sulfur delivery protein for Fe-S cluster synthesis onto IscU, an Fe-S scaffold assembly protein, as well as other S acceptor proteins. Also functions as a selenium delivery protein in the pathway for the biosynthesis of selenophosphate. This Salmonella schwarzengrund (strain CVM19633) protein is Cysteine desulfurase IscS.